The primary structure comprises 257 residues: tRNA pseudouridine synthase A (257 aa).

Catalysis depends on Asp-53, which acts as the Nucleophile. Tyr-111 serves as a coordination point for substrate.

Belongs to the tRNA pseudouridine synthase TruA family. In terms of assembly, homodimer.

The enzyme catalyses uridine(38/39/40) in tRNA = pseudouridine(38/39/40) in tRNA. Functionally, formation of pseudouridine at positions 38, 39 and 40 in the anticodon stem and loop of transfer RNAs. The sequence is that of tRNA pseudouridine synthase A from Xanthomonas euvesicatoria pv. vesicatoria (strain 85-10) (Xanthomonas campestris pv. vesicatoria).